A 363-amino-acid polypeptide reads, in one-letter code: NAD(P)H-quinone oxidoreductase subunit 1, chloroplastic (363 aa).

Transmembrane regions (helical) follow at residues 26–46, 98–118, 127–147, 246–266, 268–288, 300–320, and 336–356; these read IIWI…GVLV, FSIG…VIPF, LTIG…GLLM, TEYS…NLLV, SLFV…YIFV, VFGP…FLFI, and LLNL…LLTT.

This sequence belongs to the complex I subunit 1 family. As to quaternary structure, NDH is composed of at least 16 different subunits, 5 of which are encoded in the nucleus.

It localises to the plastid. The protein resides in the chloroplast thylakoid membrane. It carries out the reaction a plastoquinone + NADH + (n+1) H(+)(in) = a plastoquinol + NAD(+) + n H(+)(out). The catalysed reaction is a plastoquinone + NADPH + (n+1) H(+)(in) = a plastoquinol + NADP(+) + n H(+)(out). NDH shuttles electrons from NAD(P)H:plastoquinone, via FMN and iron-sulfur (Fe-S) centers, to quinones in the photosynthetic chain and possibly in a chloroplast respiratory chain. The immediate electron acceptor for the enzyme in this species is believed to be plastoquinone. Couples the redox reaction to proton translocation, and thus conserves the redox energy in a proton gradient. In Coffea arabica (Arabian coffee), this protein is NAD(P)H-quinone oxidoreductase subunit 1, chloroplastic.